We begin with the raw amino-acid sequence, 530 residues long: MTAEPLEDPEASSSSTHDLPEASSDNTADENSADLPGESEGPDSLPDDVPPGDIDEVLAEHDVDQTSEAKAITTEQNEEQDFIRTDTFMRQDEDLLSKQISTITEKNVDQAYMQINTVFEQDKDQASIQTATLMGQDEDQAFLQIVTSVGQNKDQASIQTATLMGQDEDQASLQIATSVGQNKDQPSMQMDTSIGQDVEPAISTDTATSAVKDESPDIPHQGQDNPEETTSLLPQDPGILQVFVGFQNPVWDRLAENNRTSRSRTVSPSDSQTQEKTLGNPNVPEGQPVLVPNADVLSNLPEHVQTSVGAADPPPSDTSGRDPEPTPTTNSAKQEAEGFKALNPGSKARSPGLTSEDSAADSGIPPDPPDPGSPGGSPPHSPDFYQVALGRNLLDPNLYRPDVENDYMRSMTSLLGCGEGSISSLTDILVWSDTATRMGVAVGILASGCSSPADRLQDEGPRLRTVASLLRSARSAFSSGVMSGTGSALHSVTHLLESVERRTMEGIRSAMRYLAHHLTSRWARTGPSGN.

The segment covering 1 to 10 (MTAEPLEDPE) has biased composition (acidic residues). 4 disordered regions span residues 1–85 (MTAE…FIRT), 207–233 (ATSA…TSLL), 256–290 (ENNR…QPVL), and 305–384 (QTSV…SPDF). 3 stretches are compositionally biased toward polar residues: residues 11 to 26 (ASSS…SSDN), 222 to 233 (GQDNPEETTSLL), and 257 to 280 (NNRT…TLGN). Residues 365-381 (PPDPPDPGSPGGSPPHS) are compositionally biased toward pro residues. Ser468 carries the phosphoserine modification.

The protein localises to the cytoplasm. This is Testis-expressed protein 44 (Tex44) from Mus musculus (Mouse).